We begin with the raw amino-acid sequence, 103 residues long: MQNQRIRIRLKAFDHRLIDQSTAEIVETAKRTGAQVRGPIPLPTRKERFTVLISPHVNKDARDQYEIRTHKRLVDIVEPTDKTVDALMRLDLAAGVDVQISLG.

Belongs to the universal ribosomal protein uS10 family. As to quaternary structure, part of the 30S ribosomal subunit.

Functionally, involved in the binding of tRNA to the ribosomes. This Tolumonas auensis (strain DSM 9187 / NBRC 110442 / TA 4) protein is Small ribosomal subunit protein uS10.